The primary structure comprises 1158 residues: cGMP-specific 3',5'-cyclic phosphodiesterase (1158 aa).

Disordered stretches follow at residues methionine 1 to aspartate 137 and serine 195 to glutamate 216. Residues alanine 30–asparagine 71 are compositionally biased toward low complexity. The span at glycine 108–glutamine 135 shows a compositional bias: polar residues. Residues serine 202 to proline 215 show a composition bias toward low complexity. 2 GAF domains span residues aspartate 242–isoleucine 394 and asparagine 426–isoleucine 640. The 324-residue stretch at serine 670–valine 993 folds into the PDEase domain. The active-site Proton donor is histidine 746. A divalent metal cation is bound by residues histidine 750, histidine 786, aspartate 787, and aspartate 897. 2 disordered regions span residues glutamine 1034–leucine 1065 and valine 1097–leucine 1158. Positions glycine 1041–arginine 1052 are enriched in basic and acidic residues. Low complexity predominate over residues alanine 1114–alanine 1130. Residues serine 1148 to leucine 1158 are compositionally biased toward basic residues. The residue at position 1155 (cysteine 1155) is a Cysteine methyl ester. Cysteine 1155 carries S-farnesyl cysteine lipidation. Residues alanine 1156–leucine 1158 constitute a propeptide, removed in mature form.

This sequence belongs to the cyclic nucleotide phosphodiesterase family. As to quaternary structure, interacts with PrBP. Requires a divalent metal cation as cofactor.

It localises to the cell membrane. The catalysed reaction is 3',5'-cyclic GMP + H2O = GMP + H(+). Its function is as follows. Has a role regulating cGMP transport in Malpighian tubule principal cells. The polypeptide is cGMP-specific 3',5'-cyclic phosphodiesterase (Drosophila ananassae (Fruit fly)).